Reading from the N-terminus, the 637-residue chain is Zinc finger protein rsv2 (637 aa).

6 disordered regions span residues 1-41 (MDTT…SKMN), 145-164 (SNHQ…PTSA), 169-207 (IITA…QPFS), 221-363 (TGAI…STAL), 404-427 (QDSF…TRSY), and 440-558 (SVNP…GAQR). Over residues 172-189 (ANSSPSGNAGSNASASMS) the composition is skewed to low complexity. A compositionally biased stretch (polar residues) spans 196-207 (PSASTINDQPFS). Residues 279-296 (SDLKRSLGHNQKSDRVSK) show a composition bias toward basic and acidic residues. The span at 298-344 (VSPQHQANPSTLNNPLKTQNFDSSKNLYTDNKDSSLVSPTGLQSRME) shows a compositional bias: polar residues. Basic and acidic residues-rich tracts occupy residues 345-355 (QNPEVRAHPMK) and 404-413 (QDSFNKESIK). The span at 455-471 (VPSNTTISSSPPLTSPV) shows a compositional bias: low complexity. Composition is skewed to polar residues over residues 472 to 498 (KTSA…QSAA) and 508 to 527 (YYNT…QKVS). The span at 544-554 (TTPTNSSTTAT) shows a compositional bias: low complexity. The C2H2-type 1 zinc finger occupies 572 to 603 (VRCTLQNRVTGEICNTVFSRTYDLIRHQDTIH). The C2H2-type 2; degenerate zinc-finger motif lies at 610–635 (FRCEICGDQRHFSRHDALVRHLRVKH).

The protein localises to the nucleus. The protein is Zinc finger protein rsv2 (rsv2) of Schizosaccharomyces pombe (strain 972 / ATCC 24843) (Fission yeast).